The primary structure comprises 241 residues: Biosynthetic peptidoglycan transglycosylase (241 aa).

A helical transmembrane segment spans residues 18-38; the sequence is GVIGIIALWMAGILIFAFLPV.

It belongs to the glycosyltransferase 51 family.

The protein localises to the cell inner membrane. It catalyses the reaction [GlcNAc-(1-&gt;4)-Mur2Ac(oyl-L-Ala-gamma-D-Glu-L-Lys-D-Ala-D-Ala)](n)-di-trans,octa-cis-undecaprenyl diphosphate + beta-D-GlcNAc-(1-&gt;4)-Mur2Ac(oyl-L-Ala-gamma-D-Glu-L-Lys-D-Ala-D-Ala)-di-trans,octa-cis-undecaprenyl diphosphate = [GlcNAc-(1-&gt;4)-Mur2Ac(oyl-L-Ala-gamma-D-Glu-L-Lys-D-Ala-D-Ala)](n+1)-di-trans,octa-cis-undecaprenyl diphosphate + di-trans,octa-cis-undecaprenyl diphosphate + H(+). It participates in cell wall biogenesis; peptidoglycan biosynthesis. Its function is as follows. Peptidoglycan polymerase that catalyzes glycan chain elongation from lipid-linked precursors. The protein is Biosynthetic peptidoglycan transglycosylase of Yersinia pseudotuberculosis serotype O:3 (strain YPIII).